A 386-amino-acid chain; its full sequence is Alkanesulfonate monooxygenase (386 aa).

It belongs to the SsuD family.

The catalysed reaction is an alkanesulfonate + FMNH2 + O2 = an aldehyde + FMN + sulfite + H2O + 2 H(+). Functionally, catalyzes the desulfonation of aliphatic sulfonates. The chain is Alkanesulfonate monooxygenase from Paraburkholderia phytofirmans (strain DSM 17436 / LMG 22146 / PsJN) (Burkholderia phytofirmans).